Consider the following 348-residue polypeptide: Galanin receptor type 1 (348 aa).

The Extracellular segment spans residues 1–34; it reads MELAMVNLSEGNGSDPEPPAPESRPLFGIGVENF. N-linked (GlcNAc...) asparagine glycans are attached at residues Asn-7 and Asn-12. A helical transmembrane segment spans residues 35-55; that stretch reads ITLVVFGLIFAMGVLGNSLVI. Residues 56–70 lie on the Cytoplasmic side of the membrane; it reads TVLARSKPGKPRSTT. Residues 71–91 form a helical membrane-spanning segment; it reads NLFILNLSIADLAYLLFCIPF. Topologically, residues 92–109 are extracellular; the sequence is QATVYALPTWVLGAFICK. A disulfide bridge links Cys-108 with Cys-186. The chain crosses the membrane as a helical span at residues 110 to 131; it reads FIHYFFTVSMLVSIFTLAAMSV. Residues 132-151 are Cytoplasmic-facing; that stretch reads DRYVAIVHSRRSSSLRVSRN. The helical transmembrane segment at 152–172 threads the bilayer; sequence ALLGVGFIWALSIAMASPVAY. At 173–197 the chain is on the extracellular side; it reads HQRLFHRDSNQTFCWEQWPNKLHKK. A glycan (N-linked (GlcNAc...) asparagine) is linked at Asn-182. The helical transmembrane segment at 198-218 threads the bilayer; the sequence is AYVVCTFVFGYLLPLLLICFC. The Cytoplasmic portion of the chain corresponds to 219-247; sequence YAKVLNHLHKKLKNMSKKSEASKKKTAQT. Residues 248–268 form a helical membrane-spanning segment; sequence VLVVVVVFGISWLPHHVVHLW. Residues 269 to 270 are Extracellular-facing; that stretch reads AE. Residues 271-291 traverse the membrane as a helical segment; the sequence is FGAFPLTPASFFFRITAHCLA. The Cytoplasmic segment spans residues 292–348; sequence YSNSSVNPIIYAFLSENFRKAYKQVFKCHVCDESPRSETKENKSRMDTPPSTNCTHV. Residue Cys-319 is the site of S-palmitoyl cysteine attachment. Residues 328 to 337 show a composition bias toward basic and acidic residues; sequence SETKENKSRM. The disordered stretch occupies residues 328 to 348; sequence SETKENKSRMDTPPSTNCTHV.

Belongs to the G-protein coupled receptor 1 family. As to quaternary structure, interacts with GRP39 AND HTR1A. Post-translationally, three cysteine residues are found in the C-terminus, at least one of which may be palmitoylated. Expression is detected in brain, spinal cord, heart and skeletal muscle.

Its subcellular location is the cell membrane. Functionally, receptor for the hormone galanin. The activity of this receptor is mediated by G proteins that inhibit adenylate cyclase activity. This chain is Galanin receptor type 1 (Galr1), found in Mus musculus (Mouse).